The sequence spans 274 residues: Rhamnulose-1-phosphate aldolase (274 aa).

The active site involves Glu117. Zn(2+) is bound by residues His141, His143, and His212.

Belongs to the aldolase class II family. RhaD subfamily. In terms of assembly, homotetramer. Zn(2+) is required as a cofactor.

It localises to the cytoplasm. The enzyme catalyses L-rhamnulose 1-phosphate = (S)-lactaldehyde + dihydroxyacetone phosphate. The protein operates within carbohydrate degradation; L-rhamnose degradation; glycerone phosphate from L-rhamnose: step 3/3. In terms of biological role, catalyzes the reversible cleavage of L-rhamnulose-1-phosphate to dihydroxyacetone phosphate (DHAP) and L-lactaldehyde. This is Rhamnulose-1-phosphate aldolase from Pectobacterium carotovorum subsp. carotovorum (strain PC1).